The primary structure comprises 122 residues: Large ribosomal subunit protein uL14 (122 aa).

Belongs to the universal ribosomal protein uL14 family. Part of the 50S ribosomal subunit. Forms a cluster with proteins L3 and L19. In the 70S ribosome, L14 and L19 interact and together make contacts with the 16S rRNA in bridges B5 and B8.

Its function is as follows. Binds to 23S rRNA. Forms part of two intersubunit bridges in the 70S ribosome. The chain is Large ribosomal subunit protein uL14 from Kineococcus radiotolerans (strain ATCC BAA-149 / DSM 14245 / SRS30216).